The primary structure comprises 200 residues: Segregation and condensation protein B (200 aa).

The protein belongs to the ScpB family. Homodimer. Homodimerization may be required to stabilize the binding of ScpA to the Smc head domains. Component of a cohesin-like complex composed of ScpA, ScpB and the Smc homodimer, in which ScpA and ScpB bind to the head domain of Smc. The presence of the three proteins is required for the association of the complex with DNA.

The protein localises to the cytoplasm. Its function is as follows. Participates in chromosomal partition during cell division. May act via the formation of a condensin-like complex containing Smc and ScpA that pull DNA away from mid-cell into both cell halves. This is Segregation and condensation protein B from Lactobacillus delbrueckii subsp. bulgaricus (strain ATCC 11842 / DSM 20081 / BCRC 10696 / JCM 1002 / NBRC 13953 / NCIMB 11778 / NCTC 12712 / WDCM 00102 / Lb 14).